We begin with the raw amino-acid sequence, 45 residues long: Photosystem II reaction center protein K (45 aa).

Positions 1 to 8 (METALLLA) are excised as a propeptide. A helical membrane pass occupies residues 24-44 (LPLIPLFFLLLAFVWQASVGF).

This sequence belongs to the PsbK family. PSII is composed of 1 copy each of membrane proteins PsbA, PsbB, PsbC, PsbD, PsbE, PsbF, PsbH, PsbI, PsbJ, PsbK, PsbL, PsbM, PsbT, PsbX, PsbY, PsbZ, Psb30/Ycf12, peripheral proteins PsbO, CyanoQ (PsbQ), PsbU, PsbV and a large number of cofactors. It forms dimeric complexes.

Its subcellular location is the cellular thylakoid membrane. Functionally, one of the components of the core complex of photosystem II (PSII). PSII is a light-driven water:plastoquinone oxidoreductase that uses light energy to abstract electrons from H(2)O, generating O(2) and a proton gradient subsequently used for ATP formation. It consists of a core antenna complex that captures photons, and an electron transfer chain that converts photonic excitation into a charge separation. This Microcystis aeruginosa (strain NIES-843 / IAM M-2473) protein is Photosystem II reaction center protein K.